Reading from the N-terminus, the 95-residue chain is Aspartyl/glutamyl-tRNA(Asn/Gln) amidotransferase subunit C (95 aa).

It belongs to the GatC family. In terms of assembly, heterotrimer of A, B and C subunits.

The enzyme catalyses L-glutamyl-tRNA(Gln) + L-glutamine + ATP + H2O = L-glutaminyl-tRNA(Gln) + L-glutamate + ADP + phosphate + H(+). The catalysed reaction is L-aspartyl-tRNA(Asn) + L-glutamine + ATP + H2O = L-asparaginyl-tRNA(Asn) + L-glutamate + ADP + phosphate + 2 H(+). Its function is as follows. Allows the formation of correctly charged Asn-tRNA(Asn) or Gln-tRNA(Gln) through the transamidation of misacylated Asp-tRNA(Asn) or Glu-tRNA(Gln) in organisms which lack either or both of asparaginyl-tRNA or glutaminyl-tRNA synthetases. The reaction takes place in the presence of glutamine and ATP through an activated phospho-Asp-tRNA(Asn) or phospho-Glu-tRNA(Gln). The polypeptide is Aspartyl/glutamyl-tRNA(Asn/Gln) amidotransferase subunit C (Bartonella quintana (strain Toulouse) (Rochalimaea quintana)).